A 248-amino-acid chain; its full sequence is Metallo-beta-lactamase type 2 (248 aa).

The signal sequence occupies residues 1–21; that stretch reads MKRLKGLLVLALGFTGLQVFG. H97, H99, D101, H160, and C179 together coordinate Zn(2+). K182 contributes to the substrate binding site. H221 contributes to the Zn(2+) binding site.

It belongs to the metallo-beta-lactamase superfamily. Class-B beta-lactamase family. Monomer. The cofactor is Zn(2+).

The protein resides in the periplasm. The enzyme catalyses a beta-lactam + H2O = a substituted beta-amino acid. Functionally, confers resistance to the different beta-lactams antibiotics (penicillin, cephalosporin and carbapenem) via the hydrolysis of the beta-lactam ring. This chain is Metallo-beta-lactamase type 2 (blaB6), found in Elizabethkingia meningoseptica (Chryseobacterium meningosepticum).